The sequence spans 307 residues: Small ribosomal subunit biogenesis GTPase RsgA (307 aa).

The interval 1–21 is disordered; it reads MPSEHPFSDGISTPNPKETMN. Residues 10–21 are compositionally biased toward polar residues; that stretch reads GISTPNPKETMN. One can recognise a CP-type G domain in the interval 85-242; sequence RQDAWKTKLI…LIDSPGLQEF (158 aa). Residues 135-138 and 184-192 each bind GTP; these read NKAD and GQSGMGKST. Residues cysteine 266, cysteine 271, histidine 273, and cysteine 279 each contribute to the Zn(2+) site.

The protein belongs to the TRAFAC class YlqF/YawG GTPase family. RsgA subfamily. In terms of assembly, monomer. Associates with 30S ribosomal subunit, binds 16S rRNA. Zn(2+) serves as cofactor.

The protein resides in the cytoplasm. One of several proteins that assist in the late maturation steps of the functional core of the 30S ribosomal subunit. Helps release RbfA from mature subunits. May play a role in the assembly of ribosomal proteins into the subunit. Circularly permuted GTPase that catalyzes slow GTP hydrolysis, GTPase activity is stimulated by the 30S ribosomal subunit. This Neisseria gonorrhoeae (strain NCCP11945) protein is Small ribosomal subunit biogenesis GTPase RsgA.